Consider the following 368-residue polypeptide: Agmatine deiminase (368 aa).

Residue cysteine 357 is the Amidino-cysteine intermediate of the active site.

It belongs to the agmatine deiminase family. In terms of assembly, homodimer.

It catalyses the reaction agmatine + H2O = N-carbamoylputrescine + NH4(+). Its pathway is amine and polyamine biosynthesis; putrescine biosynthesis via agmatine pathway; N-carbamoylputrescine from agmatine: step 1/1. Its function is as follows. Mediates the hydrolysis of agmatine into N-carbamoylputrescine in the arginine decarboxylase (ADC) pathway of putrescine biosynthesis, a basic polyamine. The chain is Agmatine deiminase from Pseudomonas savastanoi pv. phaseolicola (strain 1448A / Race 6) (Pseudomonas syringae pv. phaseolicola (strain 1448A / Race 6)).